The sequence spans 136 residues: uncharacterized protein (136 aa).

This is an uncharacterized protein from Ictaluridae (bullhead catfishes).